Consider the following 335-residue polypeptide: Anthranilate phosphoribosyltransferase (335 aa).

Residues glycine 79, 82 to 83 (GD), serine 87, 89 to 92 (NIST), 107 to 115 (KHGNRSITS), and serine 119 contribute to the 5-phospho-alpha-D-ribose 1-diphosphate site. Glycine 79 serves as a coordination point for anthranilate. A Mg(2+)-binding site is contributed by serine 91. Asparagine 110 is a binding site for anthranilate. An anthranilate-binding site is contributed by arginine 165. Residues aspartate 224 and glutamate 225 each contribute to the Mg(2+) site.

It belongs to the anthranilate phosphoribosyltransferase family. In terms of assembly, homodimer. It depends on Mg(2+) as a cofactor.

The catalysed reaction is N-(5-phospho-beta-D-ribosyl)anthranilate + diphosphate = 5-phospho-alpha-D-ribose 1-diphosphate + anthranilate. The protein operates within amino-acid biosynthesis; L-tryptophan biosynthesis; L-tryptophan from chorismate: step 2/5. Its function is as follows. Catalyzes the transfer of the phosphoribosyl group of 5-phosphorylribose-1-pyrophosphate (PRPP) to anthranilate to yield N-(5'-phosphoribosyl)-anthranilate (PRA). In Lactococcus lactis subsp. cremoris (strain SK11), this protein is Anthranilate phosphoribosyltransferase.